Consider the following 431-residue polypeptide: Acetylornithine aminotransferase (431 aa).

Pyridoxal 5'-phosphate contacts are provided by residues 118–119 and phenylalanine 157; that span reads GA. Arginine 160 is a binding site for N(2)-acetyl-L-ornithine. Residue 251-254 coordinates pyridoxal 5'-phosphate; the sequence is DEVQ. Lysine 284 is subject to N6-(pyridoxal phosphate)lysine. Residue serine 313 participates in N(2)-acetyl-L-ornithine binding. Residue threonine 314 coordinates pyridoxal 5'-phosphate.

It belongs to the class-III pyridoxal-phosphate-dependent aminotransferase family. ArgD subfamily. As to quaternary structure, homodimer. It depends on pyridoxal 5'-phosphate as a cofactor.

The protein resides in the cytoplasm. It catalyses the reaction N(2)-acetyl-L-ornithine + 2-oxoglutarate = N-acetyl-L-glutamate 5-semialdehyde + L-glutamate. It functions in the pathway amino-acid biosynthesis; L-arginine biosynthesis; N(2)-acetyl-L-ornithine from L-glutamate: step 4/4. The polypeptide is Acetylornithine aminotransferase (Bifidobacterium longum (strain NCC 2705)).